The following is a 658-amino-acid chain: Palmitoyltransferase ZDHHC5-B (658 aa).

The Cytoplasmic portion of the chain corresponds to 1–24 (MPVGLSVGGALGDPSPSRPFRPSR). Residues 25-45 (YVPVSAATAFLVGATTLFLCF) form a helical membrane-spanning segment. Topologically, residues 46-56 (TCPWLSEKFSS) are extracellular. A helical membrane pass occupies residues 57–77 (FIPLYNVVVFLFTLANFCMAT). Residues 78–159 (FMDPGVFPRA…NCIGRRNYRY (82 aa)) lie on the Cytoplasmic side of the membrane. A DHHC domain is found at 115-165 (KWCSTCRFYRPPRCSHCSVCDNCVEEFDHHCPWVNNCIGRRNYRYFFLFLL). The S-palmitoyl cysteine intermediate role is filled by Cys145. Residues 160–180 (FFLFLLSLTVHIMDVFGFSLL) traverse the membrane as a helical segment. Residues 181–202 (YILHHTKQLDLVQSGVTMAVMC) are Extracellular-facing. The chain crosses the membrane as a helical span at residues 203–223 (VAGLFFVPVAGLTGFHVVLVA). Residues 224-658 (RGRTTNEQVT…VGGTTYEISV (435 aa)) lie on the Cytoplasmic side of the membrane. Disordered stretches follow at residues 306 to 419 (EIME…RSGS), 490 to 522 (ESLLTPSESPEFESAAHELSPPRPHPPHSLSTA), and 540 to 658 (QREG…EISV). Residues 360 to 398 (PGKNHTASTHSSKMSRGNSMTESPSVPVTTGQPSYRSDP) show a composition bias toward polar residues. Residues 407–419 (GCRGGAEGGRSGS) show a composition bias toward gly residues. Over residues 565-575 (SSPPSRAPPLS) the composition is skewed to pro residues. Over residues 619-633 (SMPNSTIKQNVANHN) the composition is skewed to polar residues. Positions 634 to 644 (THSHKPARGVK) are enriched in basic residues.

This sequence belongs to the DHHC palmitoyltransferase family. ERF2/ZDHHC9 subfamily.

It localises to the cell membrane. The catalysed reaction is L-cysteinyl-[protein] + hexadecanoyl-CoA = S-hexadecanoyl-L-cysteinyl-[protein] + CoA. Its function is as follows. Palmitoyltransferase that catalyzes the addition of palmitate onto various protein substrates and is involved in a variety of cellular processes. The polypeptide is Palmitoyltransferase ZDHHC5-B (Danio rerio (Zebrafish)).